Consider the following 211-residue polypeptide: Dibenzothiophene metabolism operon protein DoxH (211 aa).

The protein operates within aromatic compound metabolism; naphthalene degradation. Its function is as follows. May be involved in the conversion of 2-hydroxy-4-(2'-oxo-3,5-cyclohexadienyl)-buta-2,4-dienoate to cis-O-hydroxybenzylidenepyruvate. DoxH and doxJ encode different enzymes that may have interchangeable functions. This is Dibenzothiophene metabolism operon protein DoxH (doxH) from Pseudomonas sp. (strain C18).